The following is a 322-amino-acid chain: 4-hydroxythreonine-4-phosphate dehydrogenase (322 aa).

Thr132 is a substrate binding site. A divalent metal cation contacts are provided by His160, His205, and His260. 3 residues coordinate substrate: Lys268, Asn277, and Arg286.

Belongs to the PdxA family. As to quaternary structure, homodimer. Zn(2+) is required as a cofactor. Requires Mg(2+) as cofactor. Co(2+) serves as cofactor.

The protein localises to the cytoplasm. The catalysed reaction is 4-(phosphooxy)-L-threonine + NAD(+) = 3-amino-2-oxopropyl phosphate + CO2 + NADH. It participates in cofactor biosynthesis; pyridoxine 5'-phosphate biosynthesis; pyridoxine 5'-phosphate from D-erythrose 4-phosphate: step 4/5. Catalyzes the NAD(P)-dependent oxidation of 4-(phosphooxy)-L-threonine (HTP) into 2-amino-3-oxo-4-(phosphooxy)butyric acid which spontaneously decarboxylates to form 3-amino-2-oxopropyl phosphate (AHAP). This is 4-hydroxythreonine-4-phosphate dehydrogenase from Xanthomonas oryzae pv. oryzae (strain PXO99A).